Reading from the N-terminus, the 382-residue chain is Flap endonuclease 1 (382 aa).

Residues 1–105 (MGIKGLNAII…HELTKRSSRR (105 aa)) are N-domain. Position 34 (aspartate 34) interacts with Mg(2+). The DNA site is built by arginine 47 and arginine 71. Mg(2+)-binding residues include aspartate 87, glutamate 156, glutamate 158, aspartate 177, and aspartate 179. Positions 120–251 (EKMKQERRLV…VTALKLIKTH (132 aa)) are I-domain. Glutamate 156 provides a ligand contact to DNA. DNA-binding residues include glycine 229 and aspartate 231. Aspartate 231 contacts Mg(2+). An interaction with PCNA region spans residues 339–347 (IQGRLDGFF). Residues 358-382 (AAAAKRAQENKKLNKNKNKVTKGRR) are disordered. A compositionally biased stretch (basic residues) spans 370-382 (LNKNKNKVTKGRR).

Belongs to the XPG/RAD2 endonuclease family. FEN1 subfamily. In terms of assembly, interacts with PCNA. Three molecules of RAD27 bind to one PCNA trimer with each molecule binding to one PCNA monomer. PCNA stimulates the nuclease activity without altering cleavage specificity. Mg(2+) is required as a cofactor. In terms of processing, phosphorylated. Phosphorylation upon DNA damage induces relocalization to the nuclear plasma.

The protein resides in the nucleus. Its subcellular location is the nucleolus. It is found in the nucleoplasm. The protein localises to the mitochondrion. Its function is as follows. Structure-specific nuclease with 5'-flap endonuclease and 5'-3' exonuclease activities involved in DNA replication and repair. During DNA replication, cleaves the 5'-overhanging flap structure that is generated by displacement synthesis when DNA polymerase encounters the 5'-end of a downstream Okazaki fragment. It enters the flap from the 5'-end and then tracks to cleave the flap base, leaving a nick for ligation. Also involved in the long patch base excision repair (LP-BER) pathway, by cleaving within the apurinic/apyrimidinic (AP) site-terminated flap. Acts as a genome stabilization factor that prevents flaps from equilibrating into structures that lead to duplications and deletions. Also possesses 5'-3' exonuclease activity on nicked or gapped double-stranded DNA, and exhibits RNase H activity. Also involved in replication and repair of rDNA and in repairing mitochondrial DNA. In Saccharomyces cerevisiae (strain YJM789) (Baker's yeast), this protein is Flap endonuclease 1.